A 119-amino-acid chain; its full sequence is Large ribosomal subunit protein P3z (119 aa).

Gly residues predominate over residues 79–90 (AGGAASSGGGAG). A disordered region spans residues 79–119 (AGGAASSGGGAGEAAAAPKEDEKKKEESEEEEGDFGFDLFG). The span at 96–105 (PKEDEKKKEE) shows a compositional bias: basic and acidic residues.

This sequence belongs to the eukaryotic ribosomal protein P1/P2 family. In terms of processing, phosphorylated.

In terms of biological role, plays an important role in the elongation step of protein synthesis. This chain is Large ribosomal subunit protein P3z (RPP3A), found in Arabidopsis thaliana (Mouse-ear cress).